The following is a 251-amino-acid chain: CDP-diacylglycerol pyrophosphatase (251 aa).

The helical transmembrane segment at 5 to 25 threads the bilayer; sequence GYFLLAVIVIVAAAGVGYWKF.

This sequence belongs to the Cdh family.

Its subcellular location is the cell inner membrane. It carries out the reaction a CDP-1,2-diacyl-sn-glycerol + H2O = a 1,2-diacyl-sn-glycero-3-phosphate + CMP + 2 H(+). It functions in the pathway phospholipid metabolism; CDP-diacylglycerol degradation; phosphatidate from CDP-diacylglycerol: step 1/1. This chain is CDP-diacylglycerol pyrophosphatase, found in Salmonella typhi.